A 350-amino-acid polypeptide reads, in one-letter code: UDP-3-O-acylglucosamine N-acyltransferase (350 aa).

Histidine 240 acts as the Proton acceptor in catalysis.

Belongs to the transferase hexapeptide repeat family. LpxD subfamily. In terms of assembly, homotrimer.

The catalysed reaction is a UDP-3-O-[(3R)-3-hydroxyacyl]-alpha-D-glucosamine + a (3R)-hydroxyacyl-[ACP] = a UDP-2-N,3-O-bis[(3R)-3-hydroxyacyl]-alpha-D-glucosamine + holo-[ACP] + H(+). The protein operates within bacterial outer membrane biogenesis; LPS lipid A biosynthesis. Catalyzes the N-acylation of UDP-3-O-acylglucosamine using 3-hydroxyacyl-ACP as the acyl donor. Is involved in the biosynthesis of lipid A, a phosphorylated glycolipid that anchors the lipopolysaccharide to the outer membrane of the cell. The protein is UDP-3-O-acylglucosamine N-acyltransferase of Methylobacillus flagellatus (strain ATCC 51484 / DSM 6875 / VKM B-1610 / KT).